Reading from the N-terminus, the 522-residue chain is ATP synthase subunit alpha (522 aa).

Position 176-183 (176-183 (GDRQTGKT)) interacts with ATP.

It belongs to the ATPase alpha/beta chains family. As to quaternary structure, F-type ATPases have 2 components, CF(1) - the catalytic core - and CF(0) - the membrane proton channel. CF(1) has five subunits: alpha(3), beta(3), gamma(1), delta(1), epsilon(1). CF(0) has four main subunits: a, b, b' and c.

Its subcellular location is the cell membrane. It carries out the reaction ATP + H2O + 4 H(+)(in) = ADP + phosphate + 5 H(+)(out). Functionally, produces ATP from ADP in the presence of a proton gradient across the membrane. The alpha chain is a regulatory subunit. The protein is ATP synthase subunit alpha of Chloroflexus aggregans (strain MD-66 / DSM 9485).